The chain runs to 263 residues: MPEGPEIRRAADNLEAAIKGKPLTDVWFAFAQLKPYESQLTGQLVTRIETRGKALLTHFSNGLTLYSHNQLYGVWRVIDTGEIPQTTRILRVRLQTADKIILLYSASDIEMLTAEQLMTHPFLQRVGPDVLDARLTPEEVKARLLSPRFRNRQFSGLLLDQSFLAGLGNYLRVEILWQVGLTGQHKAKDLNEAQLNALSHALLDIPRLSYTTRGQADENKHHGALFRFKVFHRDGEACERCGGIIEKTTLSSRPFYWCAHCQK.

P2 serves as the catalytic Schiff-base intermediate with DNA. E3 (proton donor) is an active-site residue. K53 (proton donor; for beta-elimination activity) is an active-site residue. DNA contacts are provided by Q70, R125, and N169. The segment at K229 to K263 adopts an FPG-type zinc-finger fold. The active-site Proton donor; for delta-elimination activity is the R253.

This sequence belongs to the FPG family. Zn(2+) is required as a cofactor.

The enzyme catalyses 2'-deoxyribonucleotide-(2'-deoxyribose 5'-phosphate)-2'-deoxyribonucleotide-DNA = a 3'-end 2'-deoxyribonucleotide-(2,3-dehydro-2,3-deoxyribose 5'-phosphate)-DNA + a 5'-end 5'-phospho-2'-deoxyribonucleoside-DNA + H(+). In terms of biological role, involved in base excision repair of DNA damaged by oxidation or by mutagenic agents. Acts as a DNA glycosylase that recognizes and removes damaged bases. Has a preference for oxidized pyrimidines, such as thymine glycol, 5,6-dihydrouracil and 5,6-dihydrothymine. Has AP (apurinic/apyrimidinic) lyase activity and introduces nicks in the DNA strand. Cleaves the DNA backbone by beta-delta elimination to generate a single-strand break at the site of the removed base with both 3'- and 5'-phosphates. The protein is Endonuclease 8 of Salmonella typhi.